Reading from the N-terminus, the 663-residue chain is UvrABC system protein B (663 aa).

The span at 1–10 shows a compositional bias: basic and acidic residues; the sequence is MIDKRDDKPF. The tract at residues 1 to 23 is disordered; it reads MIDKRDDKPFKLKSKYKPSGDQP. One can recognise a Helicase ATP-binding domain in the interval 31–418; the sequence is DNIEGGEKAQ…TNTIIEQIIR (388 aa). Residue 44–51 participates in ATP binding; sequence GATGTGKT. The Beta-hairpin signature appears at 97 to 120; it reads YYDYYQPEAYVPSSDTYIEKDSSV. Positions 435 to 601 constitute a Helicase C-terminal domain; it reads QMDDLLGEIN…TIKKDIRGLI (167 aa). The UVR domain maps to 627 to 662; it reads KEAINALQKQMQEAAELLDFELAAQMRDLILELKLM.

Belongs to the UvrB family. In terms of assembly, forms a heterotetramer with UvrA during the search for lesions. Interacts with UvrC in an incision complex.

It localises to the cytoplasm. The UvrABC repair system catalyzes the recognition and processing of DNA lesions. A damage recognition complex composed of 2 UvrA and 2 UvrB subunits scans DNA for abnormalities. Upon binding of the UvrA(2)B(2) complex to a putative damaged site, the DNA wraps around one UvrB monomer. DNA wrap is dependent on ATP binding by UvrB and probably causes local melting of the DNA helix, facilitating insertion of UvrB beta-hairpin between the DNA strands. Then UvrB probes one DNA strand for the presence of a lesion. If a lesion is found the UvrA subunits dissociate and the UvrB-DNA preincision complex is formed. This complex is subsequently bound by UvrC and the second UvrB is released. If no lesion is found, the DNA wraps around the other UvrB subunit that will check the other stand for damage. The polypeptide is UvrABC system protein B (Streptococcus pyogenes serotype M6 (strain ATCC BAA-946 / MGAS10394)).